The primary structure comprises 121 residues: Large ribosomal subunit protein uL18 (121 aa).

This sequence belongs to the universal ribosomal protein uL18 family. Part of the 50S ribosomal subunit; part of the 5S rRNA/L5/L18/L25 subcomplex. Contacts the 5S and 23S rRNAs.

This is one of the proteins that bind and probably mediate the attachment of the 5S RNA into the large ribosomal subunit, where it forms part of the central protuberance. The sequence is that of Large ribosomal subunit protein uL18 from Burkholderia mallei (strain NCTC 10247).